A 359-amino-acid polypeptide reads, in one-letter code: MSQAALRLVDKDTMDRQKALEAAVSQIERAFGKGSIMKLGGKDQVVETEVVSTGSLGLDVALGIGGVPRGRIIEVYGPESSGKTTLALHIIAEAQKKGGTCAFVDAEHALDPSYARKLGVNLDELLISQPDAGEQALEIADTLVRSGAVDVLVVDSVAALVPRAELEGEMGDNHMGLHARLMSQALRKLTGSVSKSKTIVIFINQIRMKIGVMFGNPETTTGGNALKFYASVRMEIRRVGAIKDRDEVVGNQTRVKVVKNKLAPPFKVVDFDIMYGEGISKMGELIDLGVKANVVEKSGAWFSYNSTRIGQGRENAKTFLRENPAMAAEIEGAIRQNAGLISEALAGGPGDLDGTPVEE.

77-84 is an ATP binding site; sequence GPESSGKT.

This sequence belongs to the RecA family.

It localises to the cytoplasm. Functionally, can catalyze the hydrolysis of ATP in the presence of single-stranded DNA, the ATP-dependent uptake of single-stranded DNA by duplex DNA, and the ATP-dependent hybridization of homologous single-stranded DNAs. It interacts with LexA causing its activation and leading to its autocatalytic cleavage. This is Protein RecA from Paramagnetospirillum magneticum (strain ATCC 700264 / AMB-1) (Magnetospirillum magneticum).